Reading from the N-terminus, the 553-residue chain is RNA N(6)-adenosine-methyltransferase METTL16 (553 aa).

The segment at 17–20 (PPDF) is RNA-binding. Positions 82, 110, 114, 133, 164, and 184 each coordinate S-adenosyl-L-methionine. The tract at residues 163-167 (KTLLM) is K-loop. 3 RNA-binding regions span residues 199 to 211 (SRNS…SSVN), 250 to 254 (GKKCS), and 277 to 283 (QGRTMRW). The interval 289–400 (FYDDVTVPSP…QLREVPRAPE (112 aa)) is VCR 1. Residues Ser-329, Ser-425, and Ser-429 each carry the phosphoserine modification. The tract at residues 457 to 496 (EETPEATEDERDEERGGMEAMESCKGSSNGAQDGEASEKG) is disordered. A compositionally biased stretch (acidic residues) spans 458-468 (ETPEATEDERD). Position 463 is a phosphothreonine (Thr-463). Residues 506-553 (YLFKCLVNIKKEAGDAVVEMHWVEGQNRDLMNQLCTYVRNQILRLVAS) form a VCR 2 region.

Belongs to the methyltransferase superfamily. METTL16/RlmF family. Interacts with MEPCE. Interacts with LARP7.

It is found in the nucleus. The protein resides in the cytoplasm. It carries out the reaction adenosine in U6 snRNA + S-adenosyl-L-methionine = N(6)-methyladenosine in U6 snRNA + S-adenosyl-L-homocysteine + H(+). The enzyme catalyses an adenosine in mRNA + S-adenosyl-L-methionine = an N(6)-methyladenosine in mRNA + S-adenosyl-L-homocysteine + H(+). Its activity is regulated as follows. Methyltransferase activity is autoinhibited by the K-loop region that blocks S-adenosyl-L-methionine-binding. Upon activation, K-loop changes conformation, allowing S-adenosyl-L-methionine-binding and subsequent methyltransferase activity. mRNA N6-adenosine-methyltransferase activity is inhibited by zinc. Its function is as follows. RNA N6-methyltransferase that methylates adenosine residues at the N(6) position of a subset of RNAs and is involved in S-adenosyl-L-methionine homeostasis by regulating expression of MAT2A transcripts. Able to N6-methylate a subset of mRNAs and U6 small nuclear RNAs (U6 snRNAs). In contrast to the METTL3-METTL14 heterodimer, only able to methylate a limited number of RNAs: requires both a 5'UACAGAGAA-3' nonamer sequence and a specific RNA structure. Plays a key role in S-adenosyl-L-methionine homeostasis by mediating N6-methylation of MAT2A mRNAs, altering splicing of MAT2A transcripts: in presence of S-adenosyl-L-methionine, binds the 3'-UTR region of MAT2A mRNA and specifically N6-methylates the first hairpin of MAT2A mRNA, preventing recognition of their 3'-splice site by U2AF1/U2AF35, thereby inhibiting splicing and protein production of S-adenosylmethionine synthase. In S-adenosyl-L-methionine-limiting conditions, binds the 3'-UTR region of MAT2A mRNA but stalls due to the lack of a methyl donor, preventing N6-methylation and promoting expression of MAT2A. In addition to mRNAs, also able to mediate N6-methylation of U6 small nuclear RNA (U6 snRNA): specifically N6-methylates adenine in position 43 of U6 snRNAs. Also able to bind various lncRNAs, such as 7SK snRNA (7SK RNA) or 7SL RNA. Specifically binds the 3'-end of the MALAT1 long non-coding RNA. This Mus musculus (Mouse) protein is RNA N(6)-adenosine-methyltransferase METTL16.